The chain runs to 522 residues: Flavin-dependent halogenase armH1 (522 aa).

FAD-binding residues include glycine 16, alanine 19, and glutamate 49. Residues serine 328 and glycine 329 each coordinate chloride. Residue isoleucine 330 coordinates FAD.

The protein belongs to the flavin-dependent halogenase family.

It carries out the reaction melleolide F + FADH2 + chloride + O2 = 6'-chloromelleolide F + FAD + 2 H2O + H(+). Flavin-dependent halogenase involved in the biosynthesis of melleolides, a range of antifungal and phytotoxic polyketide derivatives composed of an orsellinic acid (OA) moiety esterified to various sesquiterpene alcohols. The halogenase catalyzes the transfer of a single chlorine atom to the melleolide backbone, resulting in a 6'-chloromelleolide product. The enzyme acts on free substrate and does not depend on carrier-protein-dependent acceptor molecules. The sequence is that of Flavin-dependent halogenase armH1 from Armillaria mellea (Honey mushroom).